Here is a 494-residue protein sequence, read N- to C-terminus: Guanosine-5'-triphosphate,3'-diphosphate pyrophosphatase (494 aa).

Belongs to the GppA/Ppx family. GppA subfamily.

The catalysed reaction is guanosine 3'-diphosphate 5'-triphosphate + H2O = guanosine 3',5'-bis(diphosphate) + phosphate + H(+). Its pathway is purine metabolism; ppGpp biosynthesis; ppGpp from GTP: step 2/2. Functionally, catalyzes the conversion of pppGpp to ppGpp. Guanosine pentaphosphate (pppGpp) is a cytoplasmic signaling molecule which together with ppGpp controls the 'stringent response', an adaptive process that allows bacteria to respond to amino acid starvation, resulting in the coordinated regulation of numerous cellular activities. This is Guanosine-5'-triphosphate,3'-diphosphate pyrophosphatase from Escherichia coli O157:H7.